We begin with the raw amino-acid sequence, 370 residues long: MTNANVDATPLTTKPSQDGFYMPAEWAAQQAVWMIWPYRPDNWRSAGAYAQATFAKVADAIGGATPVYMGVPKAFLAEAQKVMPSHVTLVEMDSNDCWARDTGPTVVVNDNGECRGVDWGFNAWGGHNGGLYFPWDKDEQVAQQMLKQHGFARYSAPLILEGGSIHVDGEGTCMTSAECLLNANRNPELTKEQIEDLLRDYLNVKQFIWLQDGVYMDETDGHIDNMCCFARPGEVILHWTDDETDPQYPRSKAALDVLQNTVDAQGRKLKIHLLPQPGPLYCTEEESLGVTEGTGVPRTAGERLAGSYVNFLITNNRIVFPMLDPATDDIAAQKLQEIFPEYEIIGVPAREILLGGGNIHCITQQIPSGK.

Cysteine 361 functions as the Amidino-cysteine intermediate in the catalytic mechanism.

Belongs to the agmatine deiminase family.

It carries out the reaction agmatine + H2O = N-carbamoylputrescine + NH4(+). This Shewanella baltica (strain OS155 / ATCC BAA-1091) protein is Putative agmatine deiminase.